Consider the following 863-residue polypeptide: Dipeptidyl peptidase 9 (863 aa).

Positions 1–20 (MATTGTPTADRGDAAATDDP) are disordered. N-acetylalanine is present on alanine 2. Active-site charge relay system residues include serine 730, aspartate 808, and histidine 840. Serine 730 serves as a coordination point for Val-boroPro.

It belongs to the peptidase S9B family. DPPIV subfamily. Homodimer. Forms a ternary complex with NLRP1, composed of a DPP9 homodimer, one full-length NLRP1 protein, and one cleaved C-terminus of NLRP1 (NACHT, LRR and PYD domains-containing protein 1, C-terminus). Forms a ternary complex with CARD8, composed of a DPP9 homodimer, one full-length NLRP1 protein, and one cleaved C-terminus of CARD8 (Caspase recruitment domain-containing protein 8, C-terminus). In the ternary complex, only one subunit of the DPP9 homodimer is bound to NLRP1 or CARD8. As to expression, ubiquitously expressed, with highest levels in liver, heart and muscle, and lowest levels in brain.

The protein localises to the cytoplasm. It is found in the cytosol. It localises to the nucleus. The catalysed reaction is Release of an N-terminal dipeptide, Xaa-Yaa-|-Zaa-, from a polypeptide, preferentially when Yaa is Pro, provided Zaa is neither Pro nor hydroxyproline.. Inhibited by the serine proteinase inhibitor 4-(2-aminoethyl)benzenesulphonyl fluoride (AEBSF), and by di-isopropylfluorophosphate. Inhibited by Val-boroPro (Talabostat, PT-100), a non-selective inhibitor, which triggers pyroptosis in monocytes and macrophages. Val-boroPro inhibits activity by binding to the active site, mimicking a substrate-bound state, thereby displacing the C-terminal fragment of NLRP1, leading to activation of the NLRP1 inflammasome. In contrast, Val-boroPro does not directly displaces CARD8: it acts by promoting degradation of the N-terminal part of CARD8, leading to indirect disruption of the ternary complex. Chemical inhibition of DPP9 by Val-boroPro in HIV-1-infected cells activates the CARD8 inflammasome, triggering cell death, offering a promising strategy for the elimination of HIV-1 reservoirs in people living with HIV-1. Functionally, dipeptidyl peptidase that cleaves off N-terminal dipeptides from proteins having a Pro or Ala residue at position 2. Acts as a key inhibitor of caspase-1-dependent monocyte and macrophage pyroptosis in resting cells by preventing activation of NLRP1 and CARD8. Sequesters the cleaved C-terminal part of NLRP1 and CARD8, which respectively constitute the active part of the NLRP1 and CARD8 inflammasomes, in a ternary complex, thereby preventing their oligomerization and activation. The dipeptidyl peptidase activity is required to suppress NLRP1 and CARD8; however, neither NLRP1 nor CARD8 are bona fide substrates of DPP9, suggesting the existence of substrate(s) required for NLRP1 and CARD8 inhibition. The sequence is that of Dipeptidyl peptidase 9 from Homo sapiens (Human).